The following is a 61-amino-acid chain: Metallothionein-2 (61 aa).

An N-acetylmethionine modification is found at Met-1. The interval 1–29 (MDPNCSCAAGDSCTCAGSCKCKECKCTSC) is beta. Cys-5, Cys-7, Cys-13, Cys-15, Cys-19, Cys-21, Cys-24, Cys-26, Cys-29, Cys-33, Cys-34, Cys-36, Cys-37, Cys-41, Cys-44, Cys-48, Cys-50, and Cys-57 together coordinate a divalent metal cation. The interval 30–61 (KKSCCSCCPVGCAKCAQGCICKGASDKCSCCA) is alpha. The residue at position 58 (Ser-58) is a Phosphoserine. 2 residues coordinate a divalent metal cation: Cys-59 and Cys-60.

It belongs to the metallothionein superfamily. Type 1 family. As to quaternary structure, interacts with EOLA1.

Its function is as follows. Metallothioneins have a high content of cysteine residues that bind various heavy metals; these proteins are transcriptionally regulated by both heavy metals and glucocorticoids. The chain is Metallothionein-2 from Homo sapiens (Human).